Reading from the N-terminus, the 509-residue chain is Glutamate--tRNA ligase (509 aa).

Positions 20–30 (PSPTGFPHVGT) match the 'HIGH' region motif. Positions 117, 119, 144, and 146 each coordinate Zn(2+). The 'KMSKS' region signature appears at 261-265 (KLSKR). ATP is bound at residue lysine 264.

It belongs to the class-I aminoacyl-tRNA synthetase family. Glutamate--tRNA ligase type 1 subfamily. In terms of assembly, monomer. Requires Zn(2+) as cofactor.

Its subcellular location is the cytoplasm. It catalyses the reaction tRNA(Glu) + L-glutamate + ATP = L-glutamyl-tRNA(Glu) + AMP + diphosphate. Functionally, catalyzes the attachment of glutamate to tRNA(Glu) in a two-step reaction: glutamate is first activated by ATP to form Glu-AMP and then transferred to the acceptor end of tRNA(Glu). This chain is Glutamate--tRNA ligase, found in Psychrobacter cryohalolentis (strain ATCC BAA-1226 / DSM 17306 / VKM B-2378 / K5).